The following is a 264-amino-acid chain: Ribonuclease HII (264 aa).

The RNase H type-2 domain maps to 69–263 (KVVCGIDEVG…EENAKTITKP (195 aa)). The a divalent metal cation site is built by aspartate 75, glutamate 76, and aspartate 166.

It belongs to the RNase HII family. Mn(2+) serves as cofactor. Mg(2+) is required as a cofactor.

The protein resides in the cytoplasm. The catalysed reaction is Endonucleolytic cleavage to 5'-phosphomonoester.. Functionally, endonuclease that specifically degrades the RNA of RNA-DNA hybrids. This is Ribonuclease HII from Macrococcus caseolyticus (strain JCSC5402) (Macrococcoides caseolyticum).